Here is a 292-residue protein sequence, read N- to C-terminus: 33 kDa chaperonin (292 aa).

2 disulfides stabilise this stretch: Cys237–Cys239 and Cys270–Cys273.

It belongs to the HSP33 family. Under oxidizing conditions two disulfide bonds are formed involving the reactive cysteines. Under reducing conditions zinc is bound to the reactive cysteines and the protein is inactive.

The protein localises to the cytoplasm. Functionally, redox regulated molecular chaperone. Protects both thermally unfolding and oxidatively damaged proteins from irreversible aggregation. Plays an important role in the bacterial defense system toward oxidative stress. The protein is 33 kDa chaperonin of Lachnoclostridium phytofermentans (strain ATCC 700394 / DSM 18823 / ISDg) (Clostridium phytofermentans).